The primary structure comprises 442 residues: Hydroxycinnamoyltransferase 2 (442 aa).

Active-site proton acceptor residues include His-159 and Asp-389.

The protein belongs to the plant acyltransferase family. In terms of tissue distribution, expressed in roots and leaves. Expressed at low levels in stems and seeds.

Its function is as follows. Hydroxycinnamoyl transferase that catalyzes the transfer of an acyl from p-coumaryol-CoA to various acyl acceptors. Can use feruloyl-CoA and caffeoyl-CoA as acyl donors. In Oryza sativa subsp. japonica (Rice), this protein is Hydroxycinnamoyltransferase 2.